Consider the following 361-residue polypeptide: MTGSHRTSHAGDGAPEDDLGTFQTLEQFILDRQDSFPHSTGAFSRLLRDISLAAKIVNRDMRRAGLLDVYGSTGERNVQGEVQQKMDALAHREFVQALRRGGECCLIGSEEHAEAIPLSTVSKEGDGKYIVLLDPLDGSSNIDVNVSVGTIFSIYRLPDGYEEEEPDPAAALQPGTEQVAAGYVVYGSSTMLVYTTGNGVNGFTLDPSIGEFLLSHPDIQTPSRGRLSSINSGYYHSFEEGLRDYLDWLQQKDPETNRPAKTRYIGSFVSDFHRNLLKGGIYMYPATESSPAGKLRLMYEANPMGFIAEQAGGAASDGHRRILEKEPDKLHQRTPLFIGSEEMVRRAEAFLQGEPERALSA.

The Mg(2+) site is built by glutamate 110, aspartate 134, leucine 136, and aspartate 137. Substrate-binding positions include 137–140 (DGSS), asparagine 231, tyrosine 264, and lysine 294. Residue glutamate 300 coordinates Mg(2+).

Belongs to the FBPase class 1 family. Homotetramer. It depends on Mg(2+) as a cofactor.

The protein localises to the cytoplasm. The enzyme catalyses beta-D-fructose 1,6-bisphosphate + H2O = beta-D-fructose 6-phosphate + phosphate. It functions in the pathway carbohydrate biosynthesis; gluconeogenesis. This Salinibacter ruber (strain DSM 13855 / M31) protein is Fructose-1,6-bisphosphatase class 1 2.